Consider the following 355-residue polypeptide: Probable sugar phosphate/phosphate translocator At3g10290 (355 aa).

Residues 19–51 (QKKQPNLSISSTTKMNKKNPDQKSDMSSSSSSP) are disordered. Residues 22–32 (QPNLSISSTTK) are compositionally biased toward polar residues. The next 10 helical transmembrane spans lie at 55–75 (TLFISSLIILWYTSNIGVLLL), 89–109 (IFLTMCHMSACAILSYVSIVF), 124–144 (FLKVATLSIVFCASVVGGNIS), 150–170 (VSFNQAVGATTPFFTALFAYI), 177–197 (AWVTYGALVPVVTGVVIASGG), 198–218 (EPGFHWFGFIMCISATAARAF), 239–259 (LMLYMSPIAVIALLPVTIFME), 277–297 (YILLLVNSVMAYSANLLNFLV), 305–325 (TLQVLGNAKGAVAVVISILLF), and 328–348 (PVTVMGIGGYSITVLGVVAYG).

Belongs to the TPT transporter family. TPT (TC 2.A.7.9) subfamily.

It localises to the membrane. This chain is Probable sugar phosphate/phosphate translocator At3g10290, found in Arabidopsis thaliana (Mouse-ear cress).